Consider the following 274-residue polypeptide: S-adenosylmethionine-dependent nucleotide dehydratase (274 aa).

The region spanning 1–215 (MAYKVNLHIT…VERHAEVSHD (215 aa)) is the Radical SAM core domain. Positions 13, 17, and 20 each coordinate [4Fe-4S] cluster.

Belongs to the radical SAM superfamily. Prokaryotic viperin family. [4Fe-4S] cluster serves as cofactor.

The enzyme catalyses CTP + AH2 + S-adenosyl-L-methionine = 3'-deoxy-3',4'-didehydro-CTP + 5'-deoxyadenosine + L-methionine + A + H2O + H(+). Expression of pVip6 in E.coli (strain MG1655) confers resistance to phages lambda, P1, SECphi6, SECphi8 and T7. Catalyzes the conversion of cytidine triphosphate (CTP) to 3'-deoxy-3',4'-didehydro-CTP (ddhCTP), probably via a SAM-dependent radical mechanism. The modified nucleotide represses transcription from T7 RNA polymerase-directed genes (possibly by acting as chain terminators), strongly suggesting these nucleotides block viral polymerase transcription. The sequence is that of S-adenosylmethionine-dependent nucleotide dehydratase from Selenomonas ruminantium.